Here is a 380-residue protein sequence, read N- to C-terminus: Probable tRNA-splicing endonuclease subunit sen2 (380 aa).

Active-site residues include Y281, H289, and K325.

The protein belongs to the tRNA-intron endonuclease family. In terms of assembly, heterotetramer composed of sen2, sen15, sen34 and sen54. Interacts directly with sen54.

It carries out the reaction pretRNA = a 3'-half-tRNA molecule with a 5'-OH end + a 5'-half-tRNA molecule with a 2',3'-cyclic phosphate end + an intron with a 2',3'-cyclic phosphate and a 5'-hydroxyl terminus.. Functionally, constitutes one of the two catalytic subunit of the tRNA-splicing endonuclease complex, a complex responsible for identification and cleavage of the splice sites in pre-tRNA. It cleaves pre-tRNA at the 5'- and 3'-splice sites to release the intron. The products are an intron and two tRNA half-molecules bearing 2',3'-cyclic phosphate and 5'-OH termini. There are no conserved sequences at the splice sites, but the intron is invariably located at the same site in the gene, placing the splice sites an invariant distance from the constant structural features of the tRNA body. This subunit may anchor the endonuclease complex to the nuclear membrane. Probably carries the active site for 5'-splice site cleavage. The chain is Probable tRNA-splicing endonuclease subunit sen2 (sen2) from Schizosaccharomyces pombe (strain 972 / ATCC 24843) (Fission yeast).